A 408-amino-acid chain; its full sequence is DNA primase DnaG (408 aa).

Residues 172 to 248 form the Toprim domain; that stretch reads DSIIIVEGRA…HVDYIARAPP (77 aa). The Mg(2+) site is built by E178, D222, and D224. Residues 279–304 form a disordered region; the sequence is AAGEKAETPQQPPPQQPVPQQEVREE.

The protein belongs to the archaeal DnaG primase family. In terms of assembly, forms a ternary complex with MCM helicase and DNA. Component of the archaeal exosome complex. The cofactor is Mg(2+).

The enzyme catalyses ssDNA + n NTP = ssDNA/pppN(pN)n-1 hybrid + (n-1) diphosphate.. Its function is as follows. RNA polymerase that catalyzes the synthesis of short RNA molecules used as primers for DNA polymerase during DNA replication. Also part of the exosome, which is a complex involved in RNA degradation. Acts as a poly(A)-binding protein that enhances the interaction between heteromeric, adenine-rich transcripts and the exosome. The polypeptide is DNA primase DnaG (Pyrobaculum aerophilum (strain ATCC 51768 / DSM 7523 / JCM 9630 / CIP 104966 / NBRC 100827 / IM2)).